Reading from the N-terminus, the 430-residue chain is Serine hydroxymethyltransferase (430 aa).

120–122 (GHI) serves as a coordination point for (6S)-5,6,7,8-tetrahydrofolate. Lys-226 carries the post-translational modification N6-(pyridoxal phosphate)lysine.

This sequence belongs to the SHMT family. Homodimer. It depends on pyridoxal 5'-phosphate as a cofactor.

The protein resides in the cytoplasm. It participates in amino-acid biosynthesis; glycine biosynthesis; glycine from L-serine: step 1/1. Functionally, catalyzes the reversible interconversion of serine and glycine with a modified folate serving as the one-carbon carrier. Also exhibits a pteridine-independent aldolase activity toward beta-hydroxyamino acids, producing glycine and aldehydes, via a retro-aldol mechanism. The sequence is that of Serine hydroxymethyltransferase from Pyrobaculum islandicum (strain DSM 4184 / JCM 9189 / GEO3).